We begin with the raw amino-acid sequence, 476 residues long: TOM1-like protein 1 (476 aa).

In terms of domain architecture, VHS spans 22 to 154 (ATFAGVQTED…DLVKKGVQFP (133 aa)). Residues 155 to 179 (PSEAEAETARQETAQISSNPPTSVP) form a disordered region. The segment covering 170-179 (ISSNPPTSVP) has biased composition (polar residues). Residue Ser171 is modified to Phosphoserine. The region spanning 200–288 (EQIGKLHSEL…AILGYERFTR (89 aa)) is the GAT domain. Residues 298 to 314 (KNQKEATNTTSEPSAPS) show a composition bias toward polar residues. Positions 298–327 (KNQKEATNTTSEPSAPSQDLLDLSPSPRMP) are disordered. Ser314, Ser321, and Ser323 each carry phosphoserine. Positions 392 to 395 (YDNF) are interaction with GRB2. An SH3-binding motif is present at residues 421–425 (LPPLP). The tract at residues 442 to 445 (YEVM) is interaction with PIK3R1. Tyr460 is subject to Phosphotyrosine. Positions 460–463 (YEEI) match the SH2-binding motif.

The protein belongs to the TOM1 family. As to quaternary structure, interacts with FYN, GRB2 and PIK3R1 when phosphorylated. Interacts with LYN. In terms of processing, phosphorylated on tyrosines by FYN and LYN.

The protein resides in the golgi apparatus. It is found in the golgi stack. The protein localises to the endosome membrane. Its subcellular location is the cytoplasm. It localises to the membrane. Its function is as follows. Probable adapter protein involved in signaling pathways. Interacts with the SH2 and SH3 domains of various signaling proteins when it is phosphorylated. May promote FYN activation, possibly by disrupting intramolecular SH3-dependent interactions. The sequence is that of TOM1-like protein 1 (TOM1L1) from Homo sapiens (Human).